The following is a 272-amino-acid chain: Probable proteasome subunit alpha type-6 (272 aa).

Residues 243–261 (AARASRAAAEEPQAPTAEA) show a composition bias toward low complexity. The disordered stretch occupies residues 243 to 272 (AARASRAAAEEPQAPTAEAILDSADAMETD).

This sequence belongs to the peptidase T1A family. In terms of assembly, the 26S proteasome consists of a 20S proteasome core and two 19S regulatory subunits. The 20S proteasome core is composed of 28 subunits that are arranged in four stacked rings, resulting in a barrel-shaped structure. The two end rings are each formed by seven alpha subunits, and the two central rings are each formed by seven beta subunits. The catalytic chamber with the active sites is on the inside of the barrel.

It localises to the cytoplasm. The protein localises to the nucleus. In terms of biological role, the proteasome is a multicatalytic proteinase complex which is characterized by its ability to cleave peptides with Arg, Phe, Tyr, Leu, and Glu adjacent to the leaving group at neutral or slightly basic pH. The proteasome has an ATP-dependent proteolytic activity. This chain is Probable proteasome subunit alpha type-6, found in Schizosaccharomyces pombe (strain 972 / ATCC 24843) (Fission yeast).